The chain runs to 393 residues: S-adenosylmethionine synthase (393 aa).

Mg(2+) is bound at residue Glu-9. His-15 is an ATP binding site. Asp-17 contributes to the Mg(2+) binding site. Glu-43 provides a ligand contact to K(+). Residues Glu-56 and Gln-99 each coordinate L-methionine. ATP contacts are provided by residues 167-169 (DGK), 235-238 (SGRF), Asp-246, 252-253 (RK), Ala-269, Lys-273, and Lys-277. Asp-246 contributes to the L-methionine binding site. Lys-277 lines the L-methionine pocket.

It belongs to the AdoMet synthase family. As to quaternary structure, homotetramer; dimer of dimers. Mn(2+) serves as cofactor. It depends on Mg(2+) as a cofactor. The cofactor is Co(2+). K(+) is required as a cofactor.

Its subcellular location is the cytoplasm. It catalyses the reaction L-methionine + ATP + H2O = S-adenosyl-L-methionine + phosphate + diphosphate. Its pathway is amino-acid biosynthesis; S-adenosyl-L-methionine biosynthesis; S-adenosyl-L-methionine from L-methionine: step 1/1. With respect to regulation, increased activity in the presence of 25 percent acetonitrile, methanol or dimethylformamide. Its function is as follows. Catalyzes the formation of S-adenosylmethionine from methionine and ATP. The sequence is that of S-adenosylmethionine synthase from Acacia koa (Koa tree).